Reading from the N-terminus, the 231-residue chain is 2,3,4,5-tetrahydropyridine-2,6-dicarboxylate N-acetyltransferase (231 aa).

It belongs to the transferase hexapeptide repeat family. DapH subfamily.

It catalyses the reaction (S)-2,3,4,5-tetrahydrodipicolinate + acetyl-CoA + H2O = L-2-acetamido-6-oxoheptanedioate + CoA. It participates in amino-acid biosynthesis; L-lysine biosynthesis via DAP pathway; LL-2,6-diaminopimelate from (S)-tetrahydrodipicolinate (acetylase route): step 1/3. Functionally, catalyzes the transfer of an acetyl group from acetyl-CoA to tetrahydrodipicolinate. In Thermosipho melanesiensis (strain DSM 12029 / CIP 104789 / BI429), this protein is 2,3,4,5-tetrahydropyridine-2,6-dicarboxylate N-acetyltransferase.